A 316-amino-acid polypeptide reads, in one-letter code: Lipoyl synthase (316 aa).

Over residues Met1–Asp19 the composition is skewed to basic and acidic residues. The interval Met1–Val31 is disordered. Positions 55, 60, 66, 81, 85, 88, and 295 each coordinate [4Fe-4S] cluster. Positions Trp67 to Leu284 constitute a Radical SAM core domain.

The protein belongs to the radical SAM superfamily. Lipoyl synthase family. The cofactor is [4Fe-4S] cluster.

The protein resides in the cytoplasm. It catalyses the reaction [[Fe-S] cluster scaffold protein carrying a second [4Fe-4S](2+) cluster] + N(6)-octanoyl-L-lysyl-[protein] + 2 oxidized [2Fe-2S]-[ferredoxin] + 2 S-adenosyl-L-methionine + 4 H(+) = [[Fe-S] cluster scaffold protein] + N(6)-[(R)-dihydrolipoyl]-L-lysyl-[protein] + 4 Fe(3+) + 2 hydrogen sulfide + 2 5'-deoxyadenosine + 2 L-methionine + 2 reduced [2Fe-2S]-[ferredoxin]. It participates in protein modification; protein lipoylation via endogenous pathway; protein N(6)-(lipoyl)lysine from octanoyl-[acyl-carrier-protein]: step 2/2. Functionally, catalyzes the radical-mediated insertion of two sulfur atoms into the C-6 and C-8 positions of the octanoyl moiety bound to the lipoyl domains of lipoate-dependent enzymes, thereby converting the octanoylated domains into lipoylated derivatives. The protein is Lipoyl synthase of Ruegeria sp. (strain TM1040) (Silicibacter sp.).